We begin with the raw amino-acid sequence, 105 residues long: Synaptic plasticity regulator PANTS (105 aa).

It belongs to the UPF0545 family. Interacts with RTN4 isoform A/Nogo-A; the interaction results in enhanced RTN4-mediated inhibition of AMPA receptor clustering. Also interacts with NCAM1, RANBP2 and CCT8. Rapidly degraded by proteolysis following neuronal stimulation, resulting in increased AMPA receptor clustering.

The protein localises to the synapse. It is found in the synaptic cleft. Negatively regulates long-term potentiation and modulates adult synaptic plasticity. Stabilizes the interaction of RTN4 isoform A/Nogo-A with its receptors, inhibiting clustering of postsynaptic AMPA receptors at synaptic sites. Upon neuronal stimulation, degraded at synapses, reducing RTN4 signaling and allowing AMPA receptor clustering at individual synapses. This is Synaptic plasticity regulator PANTS from Pongo abelii (Sumatran orangutan).